The following is a 1107-amino-acid chain: Unconventional myosin-Ib (1107 aa).

The Myosin motor domain occupies 15–701 (IGVGDMVLLE…TLFQLEDLRK (687 aa)). Ser-60 is modified (phosphoserine). ATP is bound at residue 108-115 (GESGAGKT). A Glycyl lysine isopeptide (Lys-Gly) (interchain with G-Cter in SUMO1); alternate cross-link involves residue Lys-287. A Glycyl lysine isopeptide (Lys-Gly) (interchain with G-Cter in SUMO2); alternate cross-link involves residue Lys-287. An actin-binding region spans residues 592-599 (YIRCIKPN). IQ domains lie at 704–727 (LEDLATLIQKIYRGWKCRTHFLLM), 728–749 (KRSQVVIAAWYRRYAQQKRYQQ), 750–778 (IKSSALVIQSYIRGWKARKILRELKHQKR), 780–807 (KEAATTIAAYWHGTQARRELKRLKEEAR), and 808–837 (RKHAVAVIWAYWLGLKVRREYRKFFRANAG). Residues 923-1107 (KALYPSSVGQ…NNRLLEVAVP (185 aa)) form the TH1 domain.

The protein belongs to the TRAFAC class myosin-kinesin ATPase superfamily. Myosin family. In terms of tissue distribution, prominent expression is seen in the brain, lung and liver. It is also expressed in the heart and testis. A high level expression is seen in virtually all neurons (but not glia) in the postnatal and adult mouse brain and in neuroblasts of the cerebellar external granular layer.

Motor protein that may participate in process critical to neuronal development and function such as cell migration, neurite outgrowth and vesicular transport. The protein is Unconventional myosin-Ib (Myo1b) of Mus musculus (Mouse).